Here is a 586-residue protein sequence, read N- to C-terminus: Exopolysaccharide phosphotransferase SCO6023 (586 aa).

It belongs to the stealth family.

The sequence is that of Exopolysaccharide phosphotransferase SCO6023 from Streptomyces coelicolor (strain ATCC BAA-471 / A3(2) / M145).